The sequence spans 531 residues: MSLRPSAKTEVRRNRYKVAVDAEEGRRRREDNLVEIRKNKREENLQKKRFTSSMAFGSATGQTEQDLSSANQLKDNLPAMVAGIWSEDSNSQLEATNLLRKLLSIEQNPPINEVVQSGVVPRVVKFLSRDDFPKLQFEAAWALTNIASGTSENTNVIIESGAVPIFIQLLSSASEDVREQAVWALGNVAGDSPKCRDLVLSYGAMTPLLSQFNENTKLSMLRNATWTLSNFCRGKPPPAFEQTQPALPVLERLVQSMDEEVLTDACWALSYLSDNSNDKIQAVIEAGVVPRLIQLLGHSSPSVLIPALRTIGNIVTGDDLQTQMVLDQQALPCLLNLLKNNYKKSIKKEACWTISNITAGNADQIQAVIDAGIIQSLVWVLQSAEFEVKKEAAWGISNATSGGTHDQIKFMVSQGCIKPLCDLLTCPDLKVVTVCLEALENILVVGEAEKNLGHTGEDNLYAQMIDEAEGLEKIENLQSHDNNDIYDKAVKILETFWTEDNEEEGNDENHAPQSGFQFGSTNVPPGQFNFI.

The region spanning 1-58 is the IBB domain; that stretch reads MSLRPSAKTEVRRNRYKVAVDAEEGRRRREDNLVEIRKNKREENLQKKRFTSSMAFGS. ARM repeat units lie at residues 111–153, 154–198, 199–236, 237–281, 282–321, 322–364, 365–405, and 406–447; these read INEV…TSEN, TNVI…CRDL, VLSY…RGKP, PPAF…DKIQ, AVIE…DDLQ, TQMV…NADQ, IQAV…GGTH, and DQIK…VVGE. Residues 500 to 524 form a disordered region; sequence DNEEEGNDENHAPQSGFQFGSTNVP. A compositionally biased stretch (polar residues) spans 511 to 524; sequence APQSGFQFGSTNVP.

This sequence belongs to the importin alpha family. Forms a complex with importin subunit beta-1. Interacts with PRL1. Interacts with A.tumefaciens VirD2 and VirE2.

The protein localises to the nucleus. Functionally, binds to conventional NLS motifs and mediates nuclear protein import across the nuclear envelope. Acts as a cellular receptor for the nuclear import of the virD2 protein of Agrobacterium, but is not essential for Agrobacterium-mediated root transformation. May be involved in the regulation of pathogen-induced salicylic acid accumulation. The protein is Importin subunit alpha-3 of Arabidopsis thaliana (Mouse-ear cress).